The chain runs to 415 residues: Gamma-glutamyl phosphate reductase (415 aa).

The protein belongs to the gamma-glutamyl phosphate reductase family.

It localises to the cytoplasm. It catalyses the reaction L-glutamate 5-semialdehyde + phosphate + NADP(+) = L-glutamyl 5-phosphate + NADPH + H(+). Its pathway is amino-acid biosynthesis; L-proline biosynthesis; L-glutamate 5-semialdehyde from L-glutamate: step 2/2. In terms of biological role, catalyzes the NADPH-dependent reduction of L-glutamate 5-phosphate into L-glutamate 5-semialdehyde and phosphate. The product spontaneously undergoes cyclization to form 1-pyrroline-5-carboxylate. This is Gamma-glutamyl phosphate reductase from Mycobacterium bovis (strain BCG / Pasteur 1173P2).